Reading from the N-terminus, the 185-residue chain is Large ribosomal subunit protein uL6 (185 aa).

It belongs to the universal ribosomal protein uL6 family. In terms of assembly, part of the 50S ribosomal subunit.

Its function is as follows. This protein binds to the 23S rRNA, and is important in its secondary structure. It is located near the subunit interface in the base of the L7/L12 stalk, and near the tRNA binding site of the peptidyltransferase center. The polypeptide is Large ribosomal subunit protein uL6 (Deinococcus deserti (strain DSM 17065 / CIP 109153 / LMG 22923 / VCD115)).